Here is a 211-residue protein sequence, read N- to C-terminus: External core antigen (211 aa).

The N-terminal stretch at 1–19 (MHLFHLCLIILCSCPTVQA) is a signal peptide. The HBEAG stretch occupies residues 25-27 (GWL). Residues 165–211 (NAPILSTLPETTVVRRRRPSGRRTPSPRRRRSQSPRRRRSQSPASSC) form a disordered region. The segment covering 178-204 (VRRRRPSGRRTPSPRRRRSQSPRRRRS) has biased composition (basic residues). A 1; half-length repeat occupies 183-189 (PSGRRTP). The 3 X 8 AA repeats of S-P-R-R-R-R-S-Q stretch occupies residues 183-205 (PSGRRTPSPRRRRSQSPRRRRSQ). The propeptide occupies 183-211 (PSGRRTPSPRRRRSQSPRRRRSQSPASSC). A run of 2 repeats spans residues 190–197 (SPRRRRSQ) and 198–205 (SPRRRRSQ).

Belongs to the orthohepadnavirus precore antigen family. As to quaternary structure, homodimerizes. In terms of processing, phosphorylated. Post-translationally, cleaved by host furin.

It is found in the secreted. Its subcellular location is the host nucleus. In terms of biological role, may regulate immune response to the intracellular capsid in acting as a T-cell tolerogen, by having an immunoregulatory effect which prevents destruction of infected cells by cytotoxic T-cells. This immune regulation may predispose to chronicity during perinatal infections and prevent severe liver injury during adult infections. The chain is External core antigen from Woolly monkey hepatitis B virus (isolate Louisville) (WMHBV).